We begin with the raw amino-acid sequence, 291 residues long: Glutathione S-transferase 2 (291 aa).

The GST N-terminal domain occupies 2-83 (SPVKVFGHPM…YILRKYGGTA (82 aa)). Residues 41 to 42 (HK), 54 to 55 (KM), and 67 to 68 (KS) each bind glutathione. The GST C-terminal domain occupies 93–223 (GIEELAMVDV…RVCKHMPTEF (131 aa)).

Belongs to the GST superfamily. Phi family.

It carries out the reaction RX + glutathione = an S-substituted glutathione + a halide anion + H(+). Functionally, conjugation of reduced glutathione to a wide number of exogenous and endogenous hydrophobic electrophiles. The sequence is that of Glutathione S-transferase 2 (GSTA2) from Triticum aestivum (Wheat).